A 100-amino-acid chain; its full sequence is Large ribosomal subunit protein bL27 (100 aa).

Residues 1-9 (MLKMNLQLF) constitute a propeptide that is removed on maturation.

It belongs to the bacterial ribosomal protein bL27 family. Post-translationally, the N-terminus is cleaved by ribosomal processing cysteine protease Prp.

This chain is Large ribosomal subunit protein bL27, found in Clostridium perfringens (strain ATCC 13124 / DSM 756 / JCM 1290 / NCIMB 6125 / NCTC 8237 / Type A).